A 757-amino-acid chain; its full sequence is Xaa-Pro dipeptidyl-peptidase (757 aa).

Catalysis depends on charge relay system residues serine 348, aspartate 468, and histidine 498.

It belongs to the peptidase S15 family. In terms of assembly, homodimer.

It localises to the cytoplasm. It catalyses the reaction Hydrolyzes Xaa-Pro-|- bonds to release unblocked, N-terminal dipeptides from substrates including Ala-Pro-|-p-nitroanilide and (sequentially) Tyr-Pro-|-Phe-Pro-|-Gly-Pro-|-Ile.. Removes N-terminal dipeptides sequentially from polypeptides having unsubstituted N-termini provided that the penultimate residue is proline. The sequence is that of Xaa-Pro dipeptidyl-peptidase from Streptococcus pneumoniae (strain Hungary19A-6).